The following is a 459-amino-acid chain: FBD-associated F-box protein At4g13985 (459 aa).

The region spanning 18 to 64 is the F-box domain; sequence VDRLRNLPDCLLFKILLNLPTKDVVKLSVLSRRWRNVWRYVPGLDLE. The 55-residue stretch at 375-429 folds into the FBD domain; that stretch reads KEGANILPGPRRFLTSLEYVKIAKPMAAEASEIKLKLVSYFLENSTILKKLTLCL.

In Arabidopsis thaliana (Mouse-ear cress), this protein is FBD-associated F-box protein At4g13985.